Here is a 71-residue protein sequence, read N- to C-terminus: General transcription factor IIH subunit 5 (71 aa).

Threonine 69 is subject to Phosphothreonine.

The protein belongs to the TFB5 family. As to quaternary structure, component of the 7-subunit TFIIH core complex composed of XPB/ERCC3, XPD/ERCC2, GTF2H1, GTF2H2, GTF2H3, GTF2H4 and GTF2H5, which is active in NER. The core complex associates with the 3-subunit CDK-activating kinase (CAK) module composed of CCNH/cyclin H, CDK7 and MNAT1 to form the 10-subunit holoenzyme (holo-TFIIH) active in transcription. Part of TBP-based Pol II pre-initiation complex (PIC), in which Pol II core assembles with general transcription factors and other specific initiation factors including GTF2E1, GTF2E2, GTF2F1, GTF2F2, TCEA1, ERCC2, ERCC3, GTF2H2, GTF2H3, GTF2H4, GTF2H5, GTF2A1, GTF2A2, GTF2B and TBP; this large multi-subunit PIC complex mediates DNA unwinding and targets Pol II core to the transcription start site where the first phosphodiester bond forms.

It is found in the nucleus. The protein localises to the cytoplasm. Component of the general transcription and DNA repair factor IIH (TFIIH) core complex, which is involved in general and transcription-coupled nucleotide excision repair (NER) of damaged DNA and, when complexed to CAK, in RNA transcription by RNA polymerase II. In NER, TFIIH acts by opening DNA around the lesion to allow the excision of the damaged oligonucleotide and its replacement by a new DNA fragment. In transcription, TFIIH has an essential role in transcription initiation. When the pre-initiation complex (PIC) has been established, TFIIH is required for promoter opening and promoter escape. Phosphorylation of the C-terminal tail (CTD) of the largest subunit of RNA polymerase II by the kinase module CAK controls the initiation of transcription. Necessary for the stability of the TFIIH complex and for the presence of normal levels of TFIIH in the cell. This chain is General transcription factor IIH subunit 5, found in Mus musculus (Mouse).